A 607-amino-acid polypeptide reads, in one-letter code: Serine/threonine-protein kinase sid2 (607 aa).

4 positions are modified to phosphoserine: Ser56, Ser60, Ser65, and Ser86. Positions 93 to 108 (DRSGELSYKDNNHWSD) are enriched in basic and acidic residues. Residues 93-118 (DRSGELSYKDNNHWSDRSSTGSPRWE) are disordered. Residues 109–118 (RSSTGSPRWE) show a composition bias toward polar residues. The Protein kinase domain maps to 208-508 (FQTITQVGQG…LKQVMQHPYF (301 aa)). Residues 214–222 (VGQGGYGSV) and Lys237 contribute to the ATP site. Phosphotyrosine is present on Tyr219. Asp331 functions as the Proton acceptor in the catalytic mechanism. Residue Ser402 is modified to Phosphoserine. One can recognise an AGC-kinase C-terminal domain in the interval 509 to 589 (SKIDWKNVRT…RHQKNSHPTS (81 aa)). Positions 586–607 (HPTSSSSALSSPLSAPSFGTLL) are disordered. Low complexity predominate over residues 589–607 (SSSSALSSPLSAPSFGTLL).

This sequence belongs to the protein kinase superfamily. Ser/Thr protein kinase family. As to quaternary structure, interacts with mob1 and cdc11.

It localises to the cytoplasm. The protein localises to the cytoskeleton. The protein resides in the microtubule organizing center. It is found in the spindle pole body. The catalysed reaction is L-seryl-[protein] + ATP = O-phospho-L-seryl-[protein] + ADP + H(+). It catalyses the reaction L-threonyl-[protein] + ATP = O-phospho-L-threonyl-[protein] + ADP + H(+). Part of a signaling pathway. Required for initiation of medial ring constriction and septation. The protein is Serine/threonine-protein kinase sid2 (sid2) of Schizosaccharomyces pombe (strain 972 / ATCC 24843) (Fission yeast).